Reading from the N-terminus, the 89-residue chain is Phosphoribulokinase, chloroplastic (89 aa).

The disordered stretch occupies residues 1-22 (LTSVFGGAAEPPRGGNPDSNTL).

It belongs to the phosphoribulokinase family.

The protein resides in the plastid. The protein localises to the chloroplast. It catalyses the reaction D-ribulose 5-phosphate + ATP = D-ribulose 1,5-bisphosphate + ADP + H(+). It participates in carbohydrate biosynthesis; Calvin cycle. With respect to regulation, light regulated via thioredoxin by reversible oxidation/reduction of sulfhydryl/disulfide groups. This Vitis sp. (Grape) protein is Phosphoribulokinase, chloroplastic.